A 655-amino-acid chain; its full sequence is ATP-dependent RNA helicase mss116, mitochondrial (655 aa).

Residues 1–56 (MMLGAVRRYGVVHALRASVPRTICRPSNSQLLRCQTSPVTACPQSVRLLHKSSPFF) constitute a mitochondrion transit peptide. The Q motif motif lies at 84–113 (DLAERGLVDPKIIRAIVKDMNIKTMTDVQS). A Helicase ATP-binding domain is found at 116-307 (LREILQGDDV…RKTMKPNFKF (192 aa)). ATP is bound at residue 129–136 (AKTGTGKT). A DEAD box motif is present at residues 251 to 254 (DEAD). The Helicase C-terminal domain occupies 341–503 (EFVTKYVEGE…TFATATVDMT (163 aa)). Residues 594–642 (YRGSSDNMSTRPDYRGGDRDMWASNSRRGREFNSDRRESRFGNHRNADD) are disordered. 2 stretches are compositionally biased toward basic and acidic residues: residues 605-614 (PDYRGGDRDM) and 621-642 (RGRE…NADD).

It belongs to the DEAD box helicase family. DDX18/HAS1 subfamily.

The protein resides in the mitochondrion matrix. It carries out the reaction ATP + H2O = ADP + phosphate + H(+). Functionally, ATP-dependent RNA helicase required for mitochondrial splicing of group I and II introns. Also required for efficient mitochondrial translation. In Aspergillus fumigatus (strain ATCC MYA-4609 / CBS 101355 / FGSC A1100 / Af293) (Neosartorya fumigata), this protein is ATP-dependent RNA helicase mss116, mitochondrial (mss116).